We begin with the raw amino-acid sequence, 61 residues long: Putative neurotoxin-A (61 aa).

An N-terminal signal peptide occupies residues 1–19 (MKTVCGVFMVLLALTVLLA). Intrachain disulfides connect Cys-31–Cys-50, Cys-36–Cys-55, and Cys-40–Cys-57.

Belongs to the short scorpion toxin superfamily. In terms of tissue distribution, expressed by the venom gland.

It localises to the secreted. The protein is Putative neurotoxin-A of Lychas mucronatus (Chinese swimming scorpion).